A 681-amino-acid chain; its full sequence is Probable glutamate carboxypeptidase LAMP1 (681 aa).

The Cytoplasmic segment spans residues 1–6; sequence MSKSKS. Residues 7 to 24 traverse the membrane as a helical; Signal-anchor for type II membrane protein segment; it reads LAFVIAALSYSFFSLFSS. Residues 25 to 681 lie on the Extracellular side of the membrane; the sequence is PPKSHYHELF…ASLVLKGELI (657 aa). N-linked (GlcNAc...) asparagine glycosylation is found at asparagine 42, asparagine 140, asparagine 166, and asparagine 299. Residues 241–527 are catalytic; the sequence is SVDGCERLSD…SVLGLVALRL (287 aa). Zn(2+) contacts are provided by histidine 333 and aspartate 343. Glutamate 380 acts as the Nucleophile in catalysis. 2 residues coordinate Zn(2+): glutamate 381 and aspartate 409. An N-linked (GlcNAc...) asparagine glycan is attached at asparagine 441. Zn(2+) is bound at residue histidine 493. A glycan (N-linked (GlcNAc...) asparagine) is linked at asparagine 536.

Belongs to the peptidase M28 family. M28B subfamily. Zn(2+) is required as a cofactor.

The protein localises to the endoplasmic reticulum membrane. It carries out the reaction Release of an unsubstituted, C-terminal glutamyl residue, typically from Ac-Asp-Glu or folylpoly-gamma-glutamates.. In terms of biological role, acts in association with AMP1 to suppress ectopic stem cell niche formation in the shoot apical meristem (SAM) independently of cytokinin signaling pathway. The sequence is that of Probable glutamate carboxypeptidase LAMP1 from Arabidopsis thaliana (Mouse-ear cress).